Reading from the N-terminus, the 502-residue chain is Tyrosine-protein kinase receptor old-1 (502 aa).

A signal peptide spans 1–19 (MKGTLIFVVFYSSYGFAHC). At 20 to 58 (NTILRSSSLSRNFEDSLRRIPRSTDKDETGFEDSNVQEV) the chain is on the extracellular side. The helical transmembrane segment at 59–79 (IFILLYCLFVALAILICGLII) threads the bilayer. The Cytoplasmic segment spans residues 80–502 (FYNSRKRELR…WLSDEKHCDS (423 aa)). The segment at 99–140 (LLEPTSADHKRRNSSNIVPPEPTPYPITSGESDLRQTPSRLS) is disordered. Positions 127–140 (SGESDLRQTPSRLS) are enriched in polar residues. The 299-residue stretch at 175 to 473 (ISKGRPLGSG…ELKTTSNEYF (299 aa)) folds into the Protein kinase domain. Residues 181 to 189 (LGSGEFGII) and Lys-213 contribute to the ATP site. Asp-321 functions as the Proton acceptor in the catalytic mechanism.

This sequence belongs to the protein kinase superfamily. Tyr protein kinase family.

The protein resides in the cell membrane. It catalyses the reaction L-tyrosyl-[protein] + ATP = O-phospho-L-tyrosyl-[protein] + ADP + H(+). In terms of biological role, receptor tyrosine kinase which plays a role in promoting longevity and resistance to stresses including UV irradiation and high temperatures, probably downstream of daf-16. This chain is Tyrosine-protein kinase receptor old-1, found in Caenorhabditis elegans.